We begin with the raw amino-acid sequence, 52 residues long: UPF0181 protein HD_1137 (52 aa).

Belongs to the UPF0181 family.

The polypeptide is UPF0181 protein HD_1137 (Haemophilus ducreyi (strain 35000HP / ATCC 700724)).